The chain runs to 1200 residues: MGAMAYSLLFCLLLAHLGLGEVGASLDPPGRPDSPRERTPRGKQHGQQLPRASAPDPSIPWSRSTDGTILAQKLAEEVPVDVASYLYTGDFHQLKRANCSGRYELAGLPGKSPSLASSHPSLHGALDTLTHATNFLNMMLQSNKSREQTVQDDLQWYQALVRSLLEGEPSISRAAITFSTESLSTPAPQVFLQATREESRILLQDLSSSAHHLANATLETEWFHGLRRKWRPHLHRRGSNQGPRGLGHSWRRRDGLGGDRSHVKWSPPYLECENGSYKPGWLVTLSAAFYGLQPNLVPEFRGVMKVDISLQKVDIDQCSSDGWFSGTHKCHLNNSECMPIKGLGFVLGAYQCICKAGFYHPRVFSVNNFQRRGPDHHFSGSTKDVSEETHVCLPCREGCPFCADDRPCFVQEDKYLRLAIISFQALCMLLDFVSMLVVYHFRKAKSIRASGLILLETILFGSLLLYFPVVILYFEPSTFRCILLRWARLLGFATVYGTVTLKLHRVLKVFLSRTAQRIPYMTGGRVMRMLAVIVLVVFWFLVGWTSSMCQNLERDILLVGQGQTSDHLTFNMCLIDRWDYMTAVAEFLFLLWGIYLCYAVRTVPSAFHEPRYMAVAVHNELIITAIFHTIRFVLASRLQPDWMLMLYFAHAHLTVTVTIGLLLIPKFSHSSNNPRDDIATEAYEDELDMGRSGSYLNSSINSAWSEHSLDPEDIRDELKKLYAQLEIYKRKKMITNNPHLQKKRCSKKGLGRSIMRRITEIPETVSRQCSKEDKEGTDHSAAKGTGLVRKNPTESSGNTGRPKEESLKNRVFSLKKSHSTYDHVRDQTVESSSLPMESQEEEATENSTLESLSSKKLTQKLKEDSEAESTESVPLVCKSASAHNLSSEKKPGHPRTSMLQKSLSVIASAKEKTLGLAGKTQTLVMEDRAKSQKPKDRETIRKYSNSDNVETIPNSGHMEEPRKPQKSGIMKQQRVSLPTANPDVSSGITQIKDNFDIGEVCPWEVYDLTPGPMPSEPKAQKHVSIAASEVEQNPASFLKEKSYHKSKATEGLYQANHKSIDKTEVCPWEIHSQSLLEDENRLISKTPVLPGRAREENGSQLYTTNMCAGQYEELPHKVVAPKVENENLNQMGDQEKQTSSSVDIIPGSCNSSNNSHQPLTSRAEVCPWEFEPLEQPNAERSVTLPASSALSANKIPGPQK.

An N-terminal signal peptide occupies residues 1-24 (MGAMAYSLLFCLLLAHLGLGEVGA). The tract at residues 25-62 (SLDPPGRPDSPRERTPRGKQHGQQLPRASAPDPSIPWS) is disordered. Over 25–417 (SLDPPGRPDS…CFVQEDKYLR (393 aa)) the chain is Extracellular. The tract at residues 85–281 (YLYTGDFHQL…CENGSYKPGW (197 aa)) is cache-like region. 2 N-linked (GlcNAc...) asparagine glycosylation sites follow: asparagine 98 and asparagine 143. Cysteine 99 and cysteine 272 are joined by a disulfide. 2 residues coordinate glycine: serine 172 and arginine 173. The N-linked (GlcNAc...) asparagine glycan is linked to asparagine 215. Residues 234–253 (LHRRGSNQGPRGLGHSWRRR) form a disordered region. Glutamate 271 contributes to the glycine binding site. Asparagine 274 is a glycosylation site (N-linked (GlcNAc...) asparagine). Position 307 (aspartate 307) interacts with glycine. An N-linked (GlcNAc...) asparagine glycan is attached at asparagine 333. Residues 418-439 (LAIISFQALCMLLDFVSMLVVY) traverse the membrane as a helical segment. The Cytoplasmic portion of the chain corresponds to 440–451 (HFRKAKSIRASG). The chain crosses the membrane as a helical span at residues 452–474 (LILLETILFGSLLLYFPVVILYF). Residues 475-478 (EPST) are Extracellular-facing. A helical membrane pass occupies residues 479–501 (FRCILLRWARLLGFATVYGTVTL). Cysteine 481 and cysteine 573 are joined by a disulfide. Residues 502–525 (KLHRVLKVFLSRTAQRIPYMTGGR) lie on the Cytoplasmic side of the membrane. A helical membrane pass occupies residues 526 to 547 (VMRMLAVIVLVVFWFLVGWTSS). Over 548-576 (MCQNLERDILLVGQGQTSDHLTFNMCLID) the chain is Extracellular. A helical transmembrane segment spans residues 577-597 (RWDYMTAVAEFLFLLWGIYLC). Residues 598–611 (YAVRTVPSAFHEPR) are Cytoplasmic-facing. A helical membrane pass occupies residues 612–633 (YMAVAVHNELIITAIFHTIRFV). At 634–642 (LASRLQPDW) the chain is on the extracellular side. Residues 643 to 664 (MLMLYFAHAHLTVTVTIGLLLI) form a helical membrane-spanning segment. The Cytoplasmic portion of the chain corresponds to 665-1200 (PKFSHSSNNP…SANKIPGPQK (536 aa)). Serine 694, serine 705, and serine 708 each carry phosphoserine. Residues 757–875 (RITEIPETVS…EAESTESVPL (119 aa)) are disordered. Basic and acidic residues-rich tracts occupy residues 769–781 (CSKEDKEGTDHSA) and 819–828 (STYDHVRDQT). Lysine 774 is covalently cross-linked (Glycyl lysine isopeptide (Lys-Gly) (interchain with G-Cter in ubiquitin)). Low complexity predominate over residues 845 to 856 (ENSTLESLSSKK). 2 positions are modified to phosphoserine: serine 865 and serine 944. The tract at residues 947 to 988 (DNVETIPNSGHMEEPRKPQKSGIMKQQRVSLPTANPDVSSGI) is disordered. The span at 973 to 988 (QRVSLPTANPDVSSGI) shows a compositional bias: polar residues. Residues 1000 to 1004 (VCPWE) carry the VCPWE motif 1 motif. Serine 1059 bears the Phosphoserine mark. A VCPWE motif 2 motif is present at residues 1065–1069 (VCPWE). Residue serine 1074 is modified to Phosphoserine. The interval 1130–1160 (QMGDQEKQTSSSVDIIPGSCNSSNNSHQPLT) is disordered. Residues 1165-1169 (VCPWE) carry the VCPWE motif 3 motif. Positions 1177–1200 (NAERSVTLPASSALSANKIPGPQK) are disordered. The segment covering 1178–1191 (AERSVTLPASSALS) has biased composition (polar residues).

It belongs to the G-protein coupled receptor 3 family. Homodimer. Associates with the RGS7-GNB5 complex, promoting its localization to the cell membrane and regulating its GTPase activator activity. Interacts (via VCPWE motifs) with GNAO1. Interacts with GPC4. Interacts with EGFLAM. In terms of tissue distribution, highly expressed in brain. Expressed in several brain regions including the cerebral cortex, hippocampus, cerebellum and caudate putamen. Only expressed in neurons, and not in microglia, oligodendrocytes or astrocytes. Expressed in the visual center of the cerebral cortex. Also expressed in the eye, including photoreceptors, ganglion cells and trabecular meshwork.

It localises to the cell membrane. Its subcellular location is the postsynaptic cell membrane. The protein localises to the presynaptic cell membrane. It is found in the nucleus. Functionally, metabotropic receptor for glycine that controls synapse formation and function in the brain. Acts as an atypical G-protein coupled receptor that recruits and regulates the RGS7-GNB5 complex instead of activating G proteins. In absence of glycine ligand, promotes the GTPase activator activity of RGS7, increasing the GTPase activity of G protein alpha subunits, thereby driving them into their inactive GDP-bound form. Glycine-binding changes the conformation of the intracellular surface, inhibiting the GTPase activator activity of the RGS7-GNB5 complex, promoting G protein alpha subunits into their active GTP-bound form and regulating cAMP levels. Also able to bind taurine, a compound closely related to glycine, but with a two-fold lower affinity. Glycine receptor-dependent regulation of cAMP controls key ion channels, kinases and neurotrophic factors involved in neuronal excitability and synaptic transmission. Plays a pivotal role in regulating mood and cognition via its ability to regulate neuronal excitability in L2/L3 pyramidal neurons of the prefrontal cortex. Also involved in spatial learning by regulating hippocampal CA1 neuronal excitability. Acts as a synaptic organizer in the hippocampus, required for proper mossy fiber-CA3 neurocircuitry establishment, structure and function: induces presynaptic differentiation in contacting axons via its interaction with GPC4. In addition to glycine, may also act as a receptor for osteocalcin (Bglap or Bglap2) hormone: osteocalcin-binding initiates a signaling response that prevents neuronal apoptosis in the hippocampus and regulates the synthesis of neurotransmitters. In Mus musculus (Mouse), this protein is Metabotropic glycine receptor.